The chain runs to 343 residues: Sulfate/thiosulfate import ATP-binding protein CysA (343 aa).

The region spanning 3-237 (IRISHLRKQF…PASPFVYSFV (235 aa)) is the ABC transporter domain. 35–42 (GPSGSGKT) is an ATP binding site.

This sequence belongs to the ABC transporter superfamily. Sulfate/tungstate importer (TC 3.A.1.6) family. In terms of assembly, the complex is composed of two ATP-binding proteins (CysA), two transmembrane proteins (CysT and CysW) and a solute-binding protein (CysP).

The protein localises to the cell inner membrane. It carries out the reaction sulfate(out) + ATP + H2O = sulfate(in) + ADP + phosphate + H(+). The enzyme catalyses thiosulfate(out) + ATP + H2O = thiosulfate(in) + ADP + phosphate + H(+). Part of the ABC transporter complex CysAWTP involved in sulfate/thiosulfate import. Responsible for energy coupling to the transport system. This is Sulfate/thiosulfate import ATP-binding protein CysA from Xanthomonas campestris pv. campestris (strain ATCC 33913 / DSM 3586 / NCPPB 528 / LMG 568 / P 25).